Here is a 449-residue protein sequence, read N- to C-terminus: MKHITIIGAGLAGTLCGLYLARRGYEVELFESRPDIRNSPTDYGRSINLALSCRGITALKAMNLLSEVNKIMVPMRARAIHEANGEVHYQPFGRHIDEYINAISRSDLNALLLNKAELCPNIKLHFNMKLHSLDIHNKKIKFENKNGDFVEASYHRLIGADGAPSHVRDMLKNEGIVSASRDFLSHGYKELSISKKHTKGMAREHLHLWPRDSFMLLGNPNPDDSITGSLFLANEGKDSFAELNNEEKLHLFFKTQFPDAYAAMPNLVQEFFGNPTGHLSTIQCSPWYYKDECLLIGDAAHGIIPFFGQGMNSAFEDCRILDELLDEYQDDWSRVTPVFYEQRKVNTDAIAKMSMDNYHEIHSDIRNPKFILQKQIERELMLRYPEHYVSMHVLVMFTNTPYAKAMAIGELQSGLLEQICFPITDIKELNWQEVEKLLSIYDKKLAKII.

This sequence belongs to the aromatic-ring hydroxylase family. KMO subfamily. FAD serves as cofactor.

The catalysed reaction is L-kynurenine + NADPH + O2 + H(+) = 3-hydroxy-L-kynurenine + NADP(+) + H2O. It functions in the pathway cofactor biosynthesis; NAD(+) biosynthesis; quinolinate from L-kynurenine: step 1/3. In terms of biological role, catalyzes the hydroxylation of L-kynurenine (L-Kyn) to form 3-hydroxy-L-kynurenine (L-3OHKyn). Required for synthesis of quinolinic acid. The sequence is that of Kynurenine 3-monooxygenase from Legionella pneumophila (strain Corby).